Here is a 102-residue protein sequence, read N- to C-terminus: MDSQNIRIRLKAYDHRVLDNSTREIVNTAKRTGAQVRGPIPLPTHIERFTVNRSPHVDKKSREQFEIRTHRRLLDIVEPTPQTVDALMKLDLAAGVDVEIKI.

The protein belongs to the universal ribosomal protein uS10 family. In terms of assembly, part of the 30S ribosomal subunit.

Functionally, involved in the binding of tRNA to the ribosomes. This Acidiphilium cryptum (strain JF-5) protein is Small ribosomal subunit protein uS10.